Consider the following 213-residue polypeptide: 3,4-dihydroxy-2-butanone 4-phosphate synthase (213 aa).

D-ribulose 5-phosphate is bound by residues 37–38, aspartate 42, 150–154, and glutamate 174; these read RE and RPGHT. Glutamate 38 lines the Mg(2+) pocket. Residue histidine 153 participates in Mg(2+) binding.

Belongs to the DHBP synthase family. Homodimer. Mg(2+) serves as cofactor. It depends on Mn(2+) as a cofactor.

It catalyses the reaction D-ribulose 5-phosphate = (2S)-2-hydroxy-3-oxobutyl phosphate + formate + H(+). Its pathway is cofactor biosynthesis; riboflavin biosynthesis; 2-hydroxy-3-oxobutyl phosphate from D-ribulose 5-phosphate: step 1/1. Functionally, catalyzes the conversion of D-ribulose 5-phosphate to formate and 3,4-dihydroxy-2-butanone 4-phosphate. The protein is 3,4-dihydroxy-2-butanone 4-phosphate synthase of Clostridium botulinum (strain ATCC 19397 / Type A).